The following is a 403-amino-acid chain: NADH-quinone oxidoreductase subunit D (403 aa).

The protein belongs to the complex I 49 kDa subunit family. As to quaternary structure, NDH-1 is composed of 14 different subunits. Subunits NuoB, C, D, E, F, and G constitute the peripheral sector of the complex.

The protein localises to the cell inner membrane. The enzyme catalyses a quinone + NADH + 5 H(+)(in) = a quinol + NAD(+) + 4 H(+)(out). NDH-1 shuttles electrons from NADH, via FMN and iron-sulfur (Fe-S) centers, to quinones in the respiratory chain. The immediate electron acceptor for the enzyme in this species is believed to be ubiquinone. Couples the redox reaction to proton translocation (for every two electrons transferred, four hydrogen ions are translocated across the cytoplasmic membrane), and thus conserves the redox energy in a proton gradient. The sequence is that of NADH-quinone oxidoreductase subunit D from Pelobacter propionicus (strain DSM 2379 / NBRC 103807 / OttBd1).